The chain runs to 37 residues: Potassium channel toxin alpha-KTx 11.1 (37 aa).

Cystine bridges form between C8–C27, C13–C33, and C17–C35.

The protein belongs to the short scorpion toxin superfamily. Potassium channel inhibitor family. Alpha-KTx 11 subfamily. In terms of tissue distribution, expressed by the venom gland.

It localises to the secreted. In terms of biological role, binds and inhibits voltage-sensitive potassium channels. Inhibits the vertebrate potassium channels Kv1.1/KCNA1, Kv1.2/KCNA2 and Kv1.3/KCNA3 with low affinity. Also weakly inhibits Kv7.1/KCNQ1 (10 uM of the toxin inhibits currents by 21.43%). The chain is Potassium channel toxin alpha-KTx 11.1 from Parabuthus villosus (Black hairy thick-tailed scorpion).